A 1414-amino-acid chain; its full sequence is Phenyloxazoline synthase MbtB (1414 aa).

The Carrier 1 domain maps to 5-78 (TACSEIIRAE…AWSQLVSAGT (74 aa)). An O-(pantetheine 4'-phosphoryl)serine modification is found at Ser39. A condensation/cyclization region spans residues 96–394 (EGEPFPVAPM…SSLLLDVDLT (299 aa)). The segment at 579 to 975 (SYAQLRDQAS…RLPGVHAAAA (397 aa)) is adenylation. Residues 1057-1135 (APRTVLQRAL…ALAQLLTGRE (79 aa)) form the Carrier 2 domain. O-(pantetheine 4'-phosphoryl)serine is present on Ser1094. The interval 1188–1413 (GAVLVFPHAG…AVARMVSADV (226 aa)) is thioesterase.

The protein belongs to the ATP-dependent AMP-binding enzyme family. MbtB subfamily. The cofactor is pantetheine 4'-phosphate. In terms of processing, 4'-phosphopantetheine is transferred from CoA to a specific serine in each of the two carrier protein domains, leading to their activation from apo to holo forms.

The protein operates within siderophore biosynthesis; mycobactin biosynthesis. Functionally, involved in the initial steps of the mycobactin biosynthetic pathway. Putatively couples activated salicylic acid with serine or threonine and cyclizes this precursor to the hydroxyphenyloxazoline ring system present in this class of siderophores. Essential for growth in macrophages. The polypeptide is Phenyloxazoline synthase MbtB (mbtB) (Mycobacterium tuberculosis (strain CDC 1551 / Oshkosh)).